The following is a 164-amino-acid chain: NADH-quinone oxidoreductase subunit I (164 aa).

2 4Fe-4S ferredoxin-type domains span residues 55–85 (LRRY…IDAE) and 95–124 (TRYD…EGPN). Positions 65, 68, 71, 75, 104, 107, 110, and 114 each coordinate [4Fe-4S] cluster.

This sequence belongs to the complex I 23 kDa subunit family. In terms of assembly, NDH-1 is composed of 14 different subunits. Subunits NuoA, H, J, K, L, M, N constitute the membrane sector of the complex. It depends on [4Fe-4S] cluster as a cofactor.

The protein resides in the cell inner membrane. The catalysed reaction is a quinone + NADH + 5 H(+)(in) = a quinol + NAD(+) + 4 H(+)(out). NDH-1 shuttles electrons from NADH, via FMN and iron-sulfur (Fe-S) centers, to quinones in the respiratory chain. The immediate electron acceptor for the enzyme in this species is believed to be ubiquinone. Couples the redox reaction to proton translocation (for every two electrons transferred, four hydrogen ions are translocated across the cytoplasmic membrane), and thus conserves the redox energy in a proton gradient. In Ruegeria sp. (strain TM1040) (Silicibacter sp.), this protein is NADH-quinone oxidoreductase subunit I.